The sequence spans 380 residues: Glucose-1-phosphate adenylyltransferase (380 aa).

Alpha-D-glucose 1-phosphate is bound by residues G164, 179-180 (EK), and S190.

The protein belongs to the bacterial/plant glucose-1-phosphate adenylyltransferase family. In terms of assembly, homotetramer.

The catalysed reaction is alpha-D-glucose 1-phosphate + ATP + H(+) = ADP-alpha-D-glucose + diphosphate. It functions in the pathway glycan biosynthesis; glycogen biosynthesis. Involved in the biosynthesis of ADP-glucose, a building block required for the elongation reactions to produce glycogen. Catalyzes the reaction between ATP and alpha-D-glucose 1-phosphate (G1P) to produce pyrophosphate and ADP-Glc. The polypeptide is Glucose-1-phosphate adenylyltransferase (Streptococcus pneumoniae (strain Hungary19A-6)).